Consider the following 227-residue polypeptide: NAD(P)H-quinone oxidoreductase subunit K, chloroplastic (227 aa).

Residues Cys-43, Cys-44, Cys-108, and Cys-139 each coordinate [4Fe-4S] cluster.

It belongs to the complex I 20 kDa subunit family. NDH is composed of at least 16 different subunits, 5 of which are encoded in the nucleus. Requires [4Fe-4S] cluster as cofactor.

The protein resides in the plastid. It localises to the chloroplast thylakoid membrane. It catalyses the reaction a plastoquinone + NADH + (n+1) H(+)(in) = a plastoquinol + NAD(+) + n H(+)(out). The catalysed reaction is a plastoquinone + NADPH + (n+1) H(+)(in) = a plastoquinol + NADP(+) + n H(+)(out). In terms of biological role, NDH shuttles electrons from NAD(P)H:plastoquinone, via FMN and iron-sulfur (Fe-S) centers, to quinones in the photosynthetic chain and possibly in a chloroplast respiratory chain. The immediate electron acceptor for the enzyme in this species is believed to be plastoquinone. Couples the redox reaction to proton translocation, and thus conserves the redox energy in a proton gradient. In Spinacia oleracea (Spinach), this protein is NAD(P)H-quinone oxidoreductase subunit K, chloroplastic.